The chain runs to 507 residues: ATP synthase subunit alpha, chloroplastic (507 aa).

Residue glycine 170 to threonine 177 coordinates ATP.

The protein belongs to the ATPase alpha/beta chains family. As to quaternary structure, F-type ATPases have 2 components, CF(1) - the catalytic core - and CF(0) - the membrane proton channel. CF(1) has five subunits: alpha(3), beta(3), gamma(1), delta(1), epsilon(1). CF(0) has four main subunits: a, b, b' and c.

The protein localises to the plastid. It is found in the chloroplast thylakoid membrane. The enzyme catalyses ATP + H2O + 4 H(+)(in) = ADP + phosphate + 5 H(+)(out). Functionally, produces ATP from ADP in the presence of a proton gradient across the membrane. The alpha chain is a regulatory subunit. This is ATP synthase subunit alpha, chloroplastic from Populus alba (White poplar).